Here is a 699-residue protein sequence, read N- to C-terminus: Conditioned medium factor (699 aa).

The N-terminal stretch at 1–18 is a signal peptide; the sequence is MRLLLLLILIITINFSYG. Residues Asn-130, Asn-283, Asn-346, and Asn-430 are each glycosylated (N-linked (GlcNAc...) asparagine). The disordered stretch occupies residues 680 to 699; that stretch reads SPQQTTNTEYNKEMSSNSVW.

N- and O-glycosylated. In terms of processing, the N-terminus is blocked.

Its function is as follows. Involved in cell density sensing and might synchronize the onset of development by triggering aggregation when a majority of the cells in a given area have starved. The protein is Conditioned medium factor (cmfA) of Dictyostelium discoideum (Social amoeba).